Reading from the N-terminus, the 235-residue chain is Phosphoribosylaminoimidazole-succinocarboxamide synthase (235 aa).

The protein belongs to the SAICAR synthetase family.

It catalyses the reaction 5-amino-1-(5-phospho-D-ribosyl)imidazole-4-carboxylate + L-aspartate + ATP = (2S)-2-[5-amino-1-(5-phospho-beta-D-ribosyl)imidazole-4-carboxamido]succinate + ADP + phosphate + 2 H(+). It participates in purine metabolism; IMP biosynthesis via de novo pathway; 5-amino-1-(5-phospho-D-ribosyl)imidazole-4-carboxamide from 5-amino-1-(5-phospho-D-ribosyl)imidazole-4-carboxylate: step 1/2. This Streptococcus pneumoniae serotype 2 (strain D39 / NCTC 7466) protein is Phosphoribosylaminoimidazole-succinocarboxamide synthase.